Consider the following 438-residue polypeptide: UDP-N-acetylglucosamine 1-carboxyvinyltransferase 1 (438 aa).

Lysine 22–asparagine 23 lines the phosphoenolpyruvate pocket. Arginine 95 contributes to the UDP-N-acetyl-alpha-D-glucosamine binding site. Cysteine 119 acts as the Proton donor in catalysis. Residue cysteine 119 is modified to 2-(S-cysteinyl)pyruvic acid O-phosphothioketal. Residues arginine 124–leucine 128, aspartate 307, and valine 329 each bind UDP-N-acetyl-alpha-D-glucosamine.

Belongs to the EPSP synthase family. MurA subfamily.

Its subcellular location is the cytoplasm. It catalyses the reaction phosphoenolpyruvate + UDP-N-acetyl-alpha-D-glucosamine = UDP-N-acetyl-3-O-(1-carboxyvinyl)-alpha-D-glucosamine + phosphate. Its pathway is cell wall biogenesis; peptidoglycan biosynthesis. Its function is as follows. Cell wall formation. Adds enolpyruvyl to UDP-N-acetylglucosamine. The polypeptide is UDP-N-acetylglucosamine 1-carboxyvinyltransferase 1 (Lactiplantibacillus plantarum (strain ATCC BAA-793 / NCIMB 8826 / WCFS1) (Lactobacillus plantarum)).